We begin with the raw amino-acid sequence, 217 residues long: Adenylate kinase (217 aa).

10–15 contributes to the ATP binding site; sequence GGGKGT. Residues 30–59 form an NMP region; sequence STGDMLRAAVASGSEVGKKAKAVMDAGQLV. AMP-binding positions include threonine 31, arginine 36, 57-59, 85-88, and glutamine 92; these read QLV and GFPR. Residues 126–164 are LID; that stretch reads GRYTCAKCGAGYHDKFQLPQVAGKCDSCGGTEFARRPDD. Residue arginine 127 coordinates ATP. Cysteine 130, cysteine 133, cysteine 150, and cysteine 153 together coordinate Zn(2+). 2 residues coordinate AMP: arginine 161 and arginine 172. Position 200 (methionine 200) interacts with ATP.

It belongs to the adenylate kinase family. As to quaternary structure, monomer.

The protein localises to the cytoplasm. It catalyses the reaction AMP + ATP = 2 ADP. The protein operates within purine metabolism; AMP biosynthesis via salvage pathway; AMP from ADP: step 1/1. Its function is as follows. Catalyzes the reversible transfer of the terminal phosphate group between ATP and AMP. Plays an important role in cellular energy homeostasis and in adenine nucleotide metabolism. The polypeptide is Adenylate kinase (Paramagnetospirillum magneticum (strain ATCC 700264 / AMB-1) (Magnetospirillum magneticum)).